We begin with the raw amino-acid sequence, 363 residues long: uncharacterized protein (363 aa).

Residues 35–262 (TVPGPPGAES…GLSPCCGDGG (228 aa)) form a disordered region. The segment covering 56 to 75 (AVSSSRNPNSAGRTPNSYLT) has biased composition (polar residues). A compositionally biased stretch (low complexity) spans 100–116 (GADPALGSLPAAGLSGL).

This is an uncharacterized protein from Homo sapiens (Human).